The sequence spans 96 residues: uncharacterized protein (96 aa).

A coiled-coil region spans residues 9–86; the sequence is EELKSQAQVY…NKYADTVAER (78 aa).

The protein belongs to the WXG100 family. sagEsxA-like subfamily.

This is an uncharacterized protein from Clostridium acetobutylicum (strain ATCC 824 / DSM 792 / JCM 1419 / IAM 19013 / LMG 5710 / NBRC 13948 / NRRL B-527 / VKM B-1787 / 2291 / W).